Here is a 166-residue protein sequence, read N- to C-terminus: UPF0561 protein C2orf68 (166 aa).

The tract at residues 32–107 is disordered; the sequence is NQIARDDYDK…SELEPSGHQL (76 aa). Basic and acidic residues-rich tracts occupy residues 34 to 49 and 73 to 85; these read IARD…AAKE and RHRD…RNPD. The segment covering 91 to 104 has biased composition (low complexity); sequence ESSSSGGSELEPSG.

This sequence belongs to the UPF0561 family.

This chain is UPF0561 protein C2orf68 (C2orf68), found in Homo sapiens (Human).